The following is a 471-amino-acid chain: MFAFYFLTACTTLKGVFGVSPSYNGLGLTPQMGWDSWNTFACDVSEQLLLDTADRISDLGLKDMGYKYVILDDCWSSGRDSDGFLVADKHKFPNGMGHVADHLHNNSFLFGMYSSAGEYTCAGYPGSLGREEEDAQFFANNRVDYLKYDNCYNKGQFGTPDVSYHRYKAMSDALNKTGRPIFYSLCNWGQDLTFYWGSGIANSWRMSGDITAEFTRPDSRCPCDGDEYDCKYAGFHCSIMNILNKAAPMGQNAGVGGWNDLDNLEVGVGNLTDDEEKAHFSMWAMVKSPLIIGADVNHLKASSYSIYSQASVIAINQDPKGIPATRVWRYYVSDTDEYGQGEIQMWSGPLDNGDQVVALLNGGSVARPMNTTLEEIFFDSNLGSKELTSTWDIYDLWANRVDNSTASAILEQNKAATGILYNATEQSYKDGLSKNDTRLFGQKIGSLSPNAILNTTVPAHGIAFYRLRPSA.

Positions 1 to 18 (MFAFYFLTACTTLKGVFG) are cleaved as a signal peptide. A disulfide bond links Cys42 and Cys74. Residues Asp72 and Asp73 each contribute to the substrate site. Asn105 carries an N-linked (GlcNAc...) asparagine glycan. Cys121 and Cys151 are joined by a disulfide. Lys147 serves as a coordination point for substrate. The active-site Nucleophile is Asp149. A glycan (N-linked (GlcNAc...) asparagine) is linked at Asn175. Position 205 (Arg205) interacts with substrate. Asp209 serves as the catalytic Proton donor. Cystine bridges form between Cys221-Cys237 and Cys223-Cys230. Substrate is bound at residue Gln251. N-linked (GlcNAc...) asparagine glycosylation is found at Asn270, Asn370, Asn403, Asn422, Asn435, and Asn454.

Belongs to the glycosyl hydrolase 27 family. In terms of assembly, homotetramer.

It is found in the secreted. It catalyses the reaction Hydrolysis of terminal, non-reducing alpha-D-galactose residues in alpha-D-galactosides, including galactose oligosaccharides, galactomannans and galactolipids.. The sequence is that of Alpha-galactosidase 5 (MEL5) from Saccharomyces cerevisiae (Baker's yeast).